A 436-amino-acid chain; its full sequence is Histidine--tRNA ligase 1 (436 aa).

Belongs to the class-II aminoacyl-tRNA synthetase family. In terms of assembly, homodimer.

Its subcellular location is the cytoplasm. The enzyme catalyses tRNA(His) + L-histidine + ATP = L-histidyl-tRNA(His) + AMP + diphosphate + H(+). The chain is Histidine--tRNA ligase 1 from Bacillus cereus (strain ATCC 10987 / NRS 248).